Reading from the N-terminus, the 558-residue chain is Adenine deaminase (558 aa).

It belongs to the metallo-dependent hydrolases superfamily. Adenine deaminase family. Mn(2+) serves as cofactor.

The catalysed reaction is adenine + H2O + H(+) = hypoxanthine + NH4(+). In Deinococcus deserti (strain DSM 17065 / CIP 109153 / LMG 22923 / VCD115), this protein is Adenine deaminase.